The chain runs to 339 residues: Tetraacyldisaccharide 4'-kinase (339 aa).

58–65 provides a ligand contact to ATP; that stretch reads TVGGSGKT.

This sequence belongs to the LpxK family.

It catalyses the reaction a lipid A disaccharide + ATP = a lipid IVA + ADP + H(+). Its pathway is glycolipid biosynthesis; lipid IV(A) biosynthesis; lipid IV(A) from (3R)-3-hydroxytetradecanoyl-[acyl-carrier-protein] and UDP-N-acetyl-alpha-D-glucosamine: step 6/6. Transfers the gamma-phosphate of ATP to the 4'-position of a tetraacyldisaccharide 1-phosphate intermediate (termed DS-1-P) to form tetraacyldisaccharide 1,4'-bis-phosphate (lipid IVA). This is Tetraacyldisaccharide 4'-kinase from Shewanella baltica (strain OS185).